The primary structure comprises 803 residues: Zinc finger and BTB domain-containing protein 17 (803 aa).

Positions Met1–Ile104 constitute a BTB domain. Residues Glu116–Arg295 are disordered. The residue at position 120 (Ser120) is a Phosphoserine. Residues Gly132–Val142 are compositionally biased toward basic and acidic residues. Low complexity-rich tracts occupy residues Gly171 to Ala180 and Ala206 to Ser217. Acidic residues-rich tracts occupy residues Glu233–Gly244 and Glu261–Ala272. The tract at residues Glu269–Cys308 is interaction with MYC. 13 C2H2-type zinc fingers span residues His306–His328, Phe334–His356, Tyr362–His384, Tyr390–His412, Tyr418–His440, His446–His468, Leu474–His496, Tyr502–His524, Cys530–His552, Tyr558–His580, His586–His608, Tyr614–His637, and Tyr717–His739. A Glycyl lysine isopeptide (Lys-Gly) (interchain with G-Cter in ubiquitin) cross-link involves residue Lys397. Residue Lys481 forms a Glycyl lysine isopeptide (Lys-Gly) (interchain with G-Cter in ubiquitin) linkage. The segment at His637–Ala718 is interaction with MYC. Residues His637–Glu803 are interaction with HCFC1. The interval Arg779–Glu803 is disordered.

This sequence belongs to the krueppel C2H2-type zinc-finger protein family. Homooligomerizes (via the BTB/POZ domain), multimerization is required for DNA binding. Interacts (via the C-terminal zinc fingers) with GIF1; the interaction results in the recruitment of MYB to the CDKN1A/p21 and CDKN1B promoters and repression of transcription. Interacts with TRAF2, interfering with the binding of UBC13 to TRAF2, and inhibiting TRAF2 E3 ligase activity. Interacts with MYC (via the C-terminal helix-loop-helix motif); the interaction inhibits ZBTB17 transactivation and growth arrest activities and renders it insoluble in the nucleus. Also interacts with HCFC1, MAGEA4 and TMPRSS11A. Interacts with BCL6; the interaction inhibits ZBTB17 transactivation activity on target genes involved in cell cycle arrest. Interacts with ZBTB49 isoform 3/ZNF509S1; this interaction blocks ZBTB17-mediated repression of RB1. Undergoes 'Lys-48'-linked polyubiquitination at Lys-397 and Lys-481 and subsequent proteasomal degradation in a TRAF2-dependent manner. Expressed in germinal center B-cells.

It localises to the nucleus. Transcription factor that can function as an activator or repressor depending on its binding partners, and by targeting negative regulators of cell cycle progression. Plays a critical role in early lymphocyte development, where it is essential to prevent apoptosis in lymphoid precursors, allowing them to survive in response to IL7 and undergo proper lineage commitment. Has been shown to bind to the promoters of adenovirus major late protein and cyclin D1 and activate transcription. Required for early embryonic development during gastrulation. Represses RB1 transcription; this repression can be blocked by interaction with ZBTB49 isoform 3/ZNF509S1. This chain is Zinc finger and BTB domain-containing protein 17 (ZBTB17), found in Homo sapiens (Human).